Here is a 532-residue protein sequence, read N- to C-terminus: Gag-Pol polyprotein (532 aa).

Gly2 carries the N-myristoyl glycine; by host lipid modification. The tract at residues 7 to 31 (VLSGGELDRWEKIRLRPGGKKKYKL) is interaction with Gp41. The interaction with host CALM1 stretch occupies residues 8 to 43 (LSGGELDRWEKIRLRPGGKKKYKLKHIVWASRELER). Residues 12 to 19 (ELDRWEKI) are interaction with host AP3D1. Residues 14–33 (DRWEKIRLRPGGKKKYKLKH) are interaction with membrane phosphatidylinositol 4,5-bisphosphate and RNA. Positions 16 to 22 (WEKIRLR) match the Nuclear export signal motif. Positions 26–32 (KKKYKLK) match the Nuclear localization signal motif. Residues 73 to 77 (EELKS) are interaction with membrane phosphatidylinositol 4,5-bisphosphate. The tract at residues 106–127 (EEQNKSKKKAQQAAADTGNSSK) is disordered. Tyr132 carries the post-translational modification Phosphotyrosine; by host. The tract at residues 189–227 (NTVGGHQAAMQMLKETINEEAAEWDRLHPAQAGPIAPGQ) is interaction with human PPIA/CYPA and NUP153. The interval 277–363 (YSPSSILDIR…GGPGHKARVL (87 aa)) is dimerization/Multimerization of capsid protein p24. 2 consecutive CCHC-type zinc fingers follow at residues 390–407 (IKCF…NCRA) and 411–428 (KGCW…DCNE). The disordered stretch occupies residues 447–481 (EFSSEQTRANSPSRGELQVWGRDNNPLSEAGAERQ). The span at 450–459 (SEQTRANSPS) shows a compositional bias: polar residues. The interval 489-493 (PQITL) is dimerization of protease. One can recognise a Peptidase A2 domain in the interval 508 to 532 (KEALLDTGADDTVLEEMNSPGRWKP). The For protease activity; shared with dimeric partner role is filled by Asp513.

As to quaternary structure, homotrimer; further assembles as hexamers of trimers. Interacts with gp41 (via C-terminus). Interacts with host CALM1; this interaction induces a conformational change in the Matrix protein, triggering exposure of the myristate group. Interacts with host AP3D1; this interaction allows the polyprotein trafficking to multivesicular bodies during virus assembly. Part of the pre-integration complex (PIC) which is composed of viral genome, matrix protein, Vpr and integrase. Homodimer; the homodimer further multimerizes as homohexamers or homopentamers. Interacts with human PPIA/CYPA; This interaction stabilizes the capsid. Interacts with human NUP153. Interacts with host PDZD8; this interaction stabilizes the capsid. Interacts with monkey TRIM5; this interaction destabilizes the capsid. In terms of assembly, homodimer, whose active site consists of two apposed aspartic acid residues. Specific enzymatic cleavages by the viral protease yield mature proteins. The protease is released by autocatalytic cleavage. The polyprotein is cleaved during and after budding, this process is termed maturation. Proteolytic cleavage of p66 RT removes the RNase H domain to yield the p51 RT subunit. Nucleocapsid protein p7 might be further cleaved after virus entry. Post-translationally, tyrosine phosphorylated presumably in the virion by a host kinase. Phosphorylation is apparently not a major regulator of membrane association. In terms of processing, phosphorylated possibly by host MAPK1; this phosphorylation is necessary for Pin1-mediated virion uncoating. Methylated by host PRMT6, impairing its function by reducing RNA annealing and the initiation of reverse transcription.

The protein resides in the host cell membrane. It localises to the host endosome. It is found in the host multivesicular body. Its subcellular location is the virion membrane. The protein localises to the host nucleus. The protein resides in the host cytoplasm. It localises to the virion. It catalyses the reaction Specific for a P1 residue that is hydrophobic, and P1' variable, but often Pro.. Its activity is regulated as follows. The viral protease is inhibited by many synthetic protease inhibitors (PIs), such as amprenavir, atazanavir, indinavir, loprinavir, nelfinavir, ritonavir and saquinavir. Use of protease inhibitors in tritherapy regimens permit more ambitious therapeutic strategies. Mediates, with Gag polyprotein, the essential events in virion assembly, including binding the plasma membrane, making the protein-protein interactions necessary to create spherical particles, recruiting the viral Env proteins, and packaging the genomic RNA via direct interactions with the RNA packaging sequence (Psi). Gag-Pol polyprotein may regulate its own translation, by the binding genomic RNA in the 5'-UTR. At low concentration, the polyprotein would promote translation, whereas at high concentration, the polyprotein would encapsidate genomic RNA and then shut off translation. Its function is as follows. Targets the polyprotein to the plasma membrane via a multipartite membrane-binding signal, that includes its myristoylated N-terminus. Matrix protein is part of the pre-integration complex. Implicated in the release from host cell mediated by Vpu. Binds to RNA. Functionally, forms the conical core that encapsulates the genomic RNA-nucleocapsid complex in the virion. Most core are conical, with only 7% tubular. The core is constituted by capsid protein hexamer subunits. The core is disassembled soon after virion entry. Host restriction factors such as TRIM5-alpha or TRIMCyp bind retroviral capsids and cause premature capsid disassembly, leading to blocks in reverse transcription. Capsid restriction by TRIM5 is one of the factors which restricts HIV-1 to the human species. Host PIN1 apparently facilitates the virion uncoating. On the other hand, interactions with PDZD8 or CYPA stabilize the capsid. In terms of biological role, encapsulates and protects viral dimeric unspliced genomic RNA (gRNA). Binds these RNAs through its zinc fingers. Acts as a nucleic acid chaperone which is involved in rearangement of nucleic acid secondary structure during gRNA retrotranscription. Also facilitates template switch leading to recombination. As part of the polyprotein, participates in gRNA dimerization, packaging, tRNA incorporation and virion assembly. Aspartyl protease that mediates proteolytic cleavages of Gag and Gag-Pol polyproteins during or shortly after the release of the virion from the plasma membrane. Cleavages take place as an ordered, step-wise cascade to yield mature proteins. This process is called maturation. Displays maximal activity during the budding process just prior to particle release from the cell. Also cleaves Nef and Vif, probably concomitantly with viral structural proteins on maturation of virus particles. Hydrolyzes host EIF4GI and PABP1 in order to shut off the capped cellular mRNA translation. The resulting inhibition of cellular protein synthesis serves to ensure maximal viral gene expression and to evade host immune response. Also mediates cleavage of host YTHDF3. Mediates cleavage of host CARD8, thereby activating the CARD8 inflammasome, leading to the clearance of latent HIV-1 in patient CD4(+) T-cells after viral reactivation; in contrast, HIV-1 can evade CARD8-sensing when its protease remains inactive in infected cells prior to viral budding. The sequence is that of Gag-Pol polyprotein (gag-pol) from Homo sapiens (Human).